A 594-amino-acid polypeptide reads, in one-letter code: Elongation factor 4 (594 aa).

Positions 2-184 (KNIRNFSIIA…TIVAKVPAPE (183 aa)) constitute a tr-type G domain. GTP is bound by residues 14-19 (DHGKST) and 131-134 (NKID).

The protein belongs to the TRAFAC class translation factor GTPase superfamily. Classic translation factor GTPase family. LepA subfamily.

The protein resides in the cell inner membrane. It catalyses the reaction GTP + H2O = GDP + phosphate + H(+). Its function is as follows. Required for accurate and efficient protein synthesis under certain stress conditions. May act as a fidelity factor of the translation reaction, by catalyzing a one-codon backward translocation of tRNAs on improperly translocated ribosomes. Back-translocation proceeds from a post-translocation (POST) complex to a pre-translocation (PRE) complex, thus giving elongation factor G a second chance to translocate the tRNAs correctly. Binds to ribosomes in a GTP-dependent manner. The protein is Elongation factor 4 of Francisella philomiragia subsp. philomiragia (strain ATCC 25017 / CCUG 19701 / FSC 153 / O#319-036).